Here is a 125-residue protein sequence, read N- to C-terminus: MKYTLIAAIVVLALAQGTLAVEQSPELEKMAQFFEGMKTELMATVQKVSESLQSQTIIEDGRTQLEPIMTQIQEHLAPLATSVQEKVTPLAEDMQQKLKPYVDEFQSELESVLRKLLDQAKAITQ.

Positions 1 to 20 are cleaved as a signal peptide; sequence MKYTLIAAIVVLALAQGTLA.

It belongs to the apolipoprotein A1/A4/E family.

The protein resides in the secreted. Functionally, antifreeze proteins lower the blood freezing point. This chain is Type-4 ice-structuring protein, found in Gadus morhua (Atlantic cod).